The primary structure comprises 306 residues: Myb family transcription factor MOF1 (306 aa).

The region spanning 19–79 (RSKVPRLRWT…HLQMYRCSRL (61 aa)) is the HTH myb-type domain. The segment at residues 50–75 (PKLILQLMGVKGLTISHVKSHLQMYR) is a DNA-binding region (H-T-H motif).

As to quaternary structure, interacts with TPR1, TPR2 and TPR3. In terms of tissue distribution, expressed in roots, leaves, leaf sheaths, culms, panicles, lemmas, paleas, lodicules, stamens, and pistils.

The protein resides in the nucleus. Its function is as follows. Transcriptional repressor that plays a role in the regulation of organ identity and spikelet meristem determinacy. Interacts with the TPR corepressors to possibly repress the expression of downstream target genes. The sequence is that of Myb family transcription factor MOF1 from Oryza sativa subsp. japonica (Rice).